Consider the following 177-residue polypeptide: Putative fimbrin-like protein FimI (177 aa).

An N-terminal signal peptide occupies residues 1-19 (MIRKGAALVGLVLMSPVIA). Cys-40 and Cys-81 are joined by a disulfide.

Belongs to the fimbrial protein family.

The protein localises to the fimbrium. In Salmonella typhi, this protein is Putative fimbrin-like protein FimI (fimI).